Consider the following 935-residue polypeptide: MTELKAKGPRAPHVAGGPPSPEVGSPLLCRPAAGPFQGSQTSDTLPEVSATPISLDGLLFPRPCQGQDPLDEKTQDQQSLSDVEGAYSRAEATRGTGGSSSRPPEKDSGLLDSVLDTLLAPSGPGQSQPSPPACEVTSSWCLFGPELPEDPPAAPATQRVLSPLMSRSGGKAGDSSGTAAAHKVLPRGLSPSRQLLLPASGSPHWSGAPVKPSPQPAAVEVEEEDGSESEDSAGPLLKGKPRALGGAAAGGGAAAVPPGAAAGGVALVPKEDSRFSAPRVALVEQDAPMAPGRSPLATTTMDFTHVPILPLNHALLAARTRQLLEEESYDGGAGAASAFAPPRSSPSASSTPVAVGDFPDCAYPPDAHPKDDAYPLYGDFQPPALKIKEEEEGAEVSARSPRSYLVAGANPAAFPDFPLGPPPPLPPRAPPSRPGEAAVTAAPAGASVSSASSSGSTLECILYKAEGAPPQQGPFAPPPCKAQGAGGCLLPRDGLPSTSTSASAAAAGAAPALYPALGLNGLPQLGYQAAVLKEGLQQVYPPYLNYLRPDSEASQSPQYSFESLPQKICLICGDEASGCHYGVLTCGSCKVFFKRAMEGQHNYLCAGRNDCIVDKIRRKNCPACRLRKCCQAGMVLGGRKFKKFNKVRVMRALDAVALPQPVGIPNESQALSQRFTFSPGQDIQLIPPLINLLVSIEPDVIYAGHDNSKPDTSSSLLTSLNQLGERQLLSVVKWSKLLPGFRNLHIDDQITLIQYSWMSLMVFGLGWRSYKHVSGQMLYFAPDLILNEQRMKESSFYSLCLTMWQIPQEFVKLQVSQEEFLCMKVLLLLNTIPLEGLRSQTQFEEMRSSYIRELIKAIGLRQKGVVSSSQRFYQLTKLLDNLHDLVKQLHLYCLNTFIQSRALSVEFPEMMSEVIAAQLPKILAGMVKPLLFHKK.

Residues 1 to 164 form an AF3; mediates transcriptional activation region; it reads MTELKAKGPR…PATQRVLSPL (164 aa). The tract at residues 1-256 is disordered; sequence MTELKAKGPR…AAAGGGAAAV (256 aa). The interval 1 to 568 is modulating, Pro-Rich; that stretch reads MTELKAKGPR…YSFESLPQKI (568 aa). S20 bears the Phosphoserine mark. An LXXL motif 1 motif is present at residues 55–59; that stretch reads LDGLL. Position 81 is a phosphoserine (S81). The LXXL motif 2 signature appears at 115 to 119; sequence LDTLL. 2 positions are modified to phosphoserine: S130 and S162. The mediates transcriptional transrepression stretch occupies residues 165–305; it reads MSRSGGKAGD…LATTTMDFTH (141 aa). The Nuclear localization signal motif lies at 183–187; it reads KVLPR. Residues S190 and S213 each carry the phosphoserine modification. A compositionally biased stretch (acidic residues) spans 220–231; sequence EVEEEDGSESED. The segment covering 232–246 has biased composition (low complexity); that stretch reads SAGPLLKGKPRALGG. S294 is subject to Phosphoserine; by MAPK1. Positions 328-353 are disordered; that stretch reads SYDGGAGAASAFAPPRSSPSASSTPV. The segment covering 335-350 has biased composition (low complexity); the sequence is AASAFAPPRSSPSASS. Position 345 is a phosphoserine; by MAPK (S345). K388 participates in a covalent cross-link: Glycyl lysine isopeptide (Lys-Gly) (interchain with G-Cter in SUMO); alternate. A Glycyl lysine isopeptide (Lys-Gly) (interchain with G-Cter in ubiquitin); alternate cross-link involves residue K388. At S400 the chain carries Phosphoserine; by CDK2. Positions 415-452 are disordered; it reads PDFPLGPPPPLPPRAPPSRPGEAAVTAAPAGASVSSAS. The segment covering 418 to 433 has biased composition (pro residues); it reads PLGPPPPLPPRAPPSR. A compositionally biased stretch (low complexity) spans 434-452; that stretch reads PGEAAVTAAPAGASVSSAS. Residues 456–548 are AF1; mediates transcriptional activation; it reads STLECILYKA…VYPPYLNYLR (93 aa). Residue K533 forms a Glycyl lysine isopeptide (Lys-Gly) (interchain with G-Cter in SUMO) linkage. 2 NR C4-type zinc fingers span residues 569 to 589 and 605 to 629; these read CLIC…CGSC and CAGR…LRKC. The segment at residues 569-641 is a DNA-binding region (nuclear receptor); it reads CLICGDEASG…AGMVLGGRKF (73 aa). The residue at position 678 (S678) is a Phosphoserine. In terms of domain architecture, NR LBD spans 681–915; that stretch reads QDIQLIPPLI…EFPEMMSEVI (235 aa). Residues 689–935 are AF2; mediates transcriptional activation; sequence LINLLVSIEP…MVKPLLFHKK (247 aa). Residue R768 participates in progesterone binding.

This sequence belongs to the nuclear hormone receptor family. In terms of assembly, interacts with SMARD1 and UNC45A. Interacts with CUEDC2; the interaction promotes ubiquitination, decreases sumoylation, and represses transcriptional activity. Interacts with PIAS3; the interaction promotes sumoylation of PR in a hormone-dependent manner, inhibits DNA-binding, and alters nuclear export. Interacts with SP1; the interaction requires ligand-induced phosphorylation on Ser-345 by ERK1/2-MAPK. Interacts with PRMT2. Interacts with NCOA2 and NCOA1. Interacts with KLF9. Interacts with GTF2B. Post-translationally, phosphorylated on multiple serine sites. Several of these sites are hormone-dependent. Phosphorylation on Ser-294 is highly hormone-dependent and modulates ubiquitination and sumoylation on Lys-388. Phosphorylation on Ser-345 also requires induction by hormone. Basal phosphorylation on Ser-81, Ser-162, Ser-190 and Ser-400 is increased in response to progesterone and can be phosphorylated in vitro by the CDK2-A1 complex. Increased levels of phosphorylation on Ser-400 also in the presence of EGF, heregulin, IGF, PMA and FBS. Phosphorylation at this site by CDK2 is ligand-independent, and increases nuclear translocation and transcriptional activity. Phosphorylation at Ser-162 and Ser-294, but not at Ser-190, is impaired during the G(2)/M phase of the cell cycle. Phosphorylation on Ser-345 by ERK1/2 MAPK is required for interaction with SP1. In terms of processing, sumoylation is hormone-dependent and represses transcriptional activity. Sumoylation on all three sites is enhanced by PIAS3. Desumoylated by SENP1. Sumoylation on Lys-388, the main site of sumoylation, is repressed by ubiquitination on the same site, and modulated by phosphorylation at Ser-294. Ubiquitination is hormone-dependent and represses sumoylation on the same site. Promoted by MAPK-mediated phosphorylation on Ser-294. Ubiquitinated by UBR5, leading to its degradation: UBR5 specifically recognizes and binds ligand-bound PGR when it is not associated with coactivators (NCOAs). In presence of NCOAs, the UBR5-degron is not accessible, preventing its ubiquitination and degradation. Post-translationally, palmitoylated by ZDHHC7 and ZDHHC21. Palmitoylation is required for plasma membrane targeting and for rapid intracellular signaling via ERK and AKT kinases and cAMP generation.

The protein localises to the nucleus. The protein resides in the cytoplasm. Functionally, the steroid hormones and their receptors are involved in the regulation of eukaryotic gene expression and affect cellular proliferation and differentiation in target tissues. Transcriptional activator of several progesteron-dependent promoters in a variety of cell types. Involved in activation of SRC-dependent MAPK signaling on hormone stimulation. The chain is Progesterone receptor (PGR) from Macaca sylvanus (Barbary macaque).